The sequence spans 600 residues: Albumin (600 aa).

Positions 1 to 10 (LLFLFSSAYS) are cleaved as a signal peptide. A propeptide spanning residues 11–16 (RGVFRR) is cleaved from the precursor. Albumin domains are found at residues 11 to 202 (RGVF…DELR), 203 to 395 (DEGK…EFQP), and 396 to 593 (LVEE…KFVA). H19 provides a ligand contact to Cu cation. S21 is modified (phosphoserine). The Ca(2+) site is built by E22 and D29. Cysteines 69 and 78 form a disulfide. Residues S74 and S81 each carry the phosphoserine modification. A Zn(2+)-binding site is contributed by H83. 6 disulfides stabilise this stretch: C91–C107, C106–C117, C140–C185, C184–C193, C216–C262, and C261–C269. Position 99 is a phosphothreonine (T99). K221 carries the N6-succinyllysine modification. K256 provides a ligand contact to (4Z,15Z)-bilirubin IXalpha. Residue E260 participates in Ca(2+) binding. Zn(2+) is bound by residues H263 and D265. Residues D265, E268, D271, and D275 each coordinate Ca(2+). 8 disulfide bridges follow: C281/C295, C294/C305, C332/C377, C376/C385, C408/C454, C453/C464, C477/C493, and C492/C503. Phosphoserine is present on S289. At S435 the chain carries Phosphoserine. Phosphothreonine is present on residues T436 and T438. N6-succinyllysine is present on K452. S505 carries the post-translational modification Phosphoserine. 2 cysteine pairs are disulfide-bonded: C530-C575 and C574-C583. N6-succinyllysine is present on K535. Position 550 is an N6-methyllysine (K550). Residue K580 is modified to N6-succinyllysine.

Belongs to the ALB/AFP/VDB family. As to quaternary structure, interacts with FCGRT; this interaction regulates ALB homeostasis. Interacts with TASOR. In plasma, occurs in a covalently-linked complex with chromophore-bound alpha-1-microglobulin; this interaction does not prevent fatty acid binding to ALB. Post-translationally, phosphorylated by FAM20C in the extracellular medium. In terms of tissue distribution, plasma.

It localises to the secreted. Functionally, binds water, Ca(2+), Na(+), K(+), fatty acids, hormones, bilirubin and drugs. Its main function is the regulation of the colloidal osmotic pressure of blood. Major zinc transporter in plasma, typically binds about 80% of all plasma zinc. Major calcium and magnesium transporter in plasma, binds approximately 45% of circulating calcium and magnesium in plasma. Potentially has more than two calcium-binding sites and might additionally bind calcium in a non-specific manner. The shared binding site between zinc and calcium at residue Asp-265 suggests a crosstalk between zinc and calcium transport in the blood. The rank order of affinity is zinc &gt; calcium &gt; magnesium. Binds to the bacterial siderophore enterobactin and inhibits enterobactin-mediated iron uptake of E.coli from ferric transferrin, and may thereby limit the utilization of iron and growth of enteric bacteria such as E.coli. Does not prevent iron uptake by the bacterial siderophore aerobactin. This chain is Albumin (ALB), found in Macaca mulatta (Rhesus macaque).